The primary structure comprises 238 residues: Ribosomal RNA small subunit methyltransferase G (238 aa).

S-adenosyl-L-methionine-binding positions include G79, F84, 102-104, 130-131, and R149; these read EAT and IE.

This sequence belongs to the methyltransferase superfamily. RNA methyltransferase RsmG family.

The protein resides in the cytoplasm. Functionally, specifically methylates the N7 position of a guanine in 16S rRNA. The polypeptide is Ribosomal RNA small subunit methyltransferase G (Chloroflexus aggregans (strain MD-66 / DSM 9485)).